The primary structure comprises 160 residues: Zinc finger A20 and AN1 domain-containing stress-associated protein 6 (160 aa).

The A20-type zinc finger occupies 18 to 52; that stretch reads PEAPILCVNNCGFFGSRMTENMCSKCYRDTVKAKT. Residues Cys-24, Cys-28, Cys-40, and Cys-43 each contribute to the Zn(2+) site. The tract at residues 73-94 is disordered; the sequence is EVTDGGSGSVADGKQVMEEDTP. An AN1-type zinc finger spans residues 95–141; that stretch reads KPPSNRCLSCRKKVGLTGFKCRCGGTFCSMHRYADSHKCTFDYKQVG. Zn(2+)-binding residues include Cys-101, Cys-104, Cys-115, Cys-117, Cys-122, His-125, His-131, and Cys-133.

Functionally, may be involved in environmental stress response. The sequence is that of Zinc finger A20 and AN1 domain-containing stress-associated protein 6 (SAP6) from Oryza sativa subsp. japonica (Rice).